The chain runs to 57 residues: MAVPARRTSKTKKRLRRTHEKLKSPEISFDENLGDYRKSHHVSLKGYYGGKKVMDKK.

The disordered stretch occupies residues 1–22 (MAVPARRTSKTKKRLRRTHEKL). Basic residues predominate over residues 7–20 (RTSKTKKRLRRTHE).

This sequence belongs to the bacterial ribosomal protein bL32 family.

The sequence is that of Large ribosomal subunit protein bL32A (rpmF1) from Enterococcus faecalis (strain ATCC 700802 / V583).